Reading from the N-terminus, the 725-residue chain is MGSQNSDDDSGSSGSSRSGSRSVTPQGGSAPGSQRSRRSGSGSDRSRSGSRSSRSRSGSGSPRSARSGSAESRHSQLSGSARSKRSRSAHSRRSGSARSRKSGTPESPQSHRSGSLQSRKSGSPQSRRSGSPQSRKSGSTHSRRSGSAHSRRSGSARSRKSGSAQSDRSESRSRSHSGSLKGNEESRSNSPNLQIDVERANSKSGSRSRSRSRSGSRTSRSRSKTGTPSPNRSRSGSASGSGSDVGVPKKKARKASGSDQEKKKSGSDSDIEESPTKAKKSRLIDTDSDSNQDVGKKAPAAADIFGDADDISDDEDEAGPAARKSPVRSKSRSQSKSHSHSRSMSHSRSRSRSRSRDKVESQVESAPKEDEPEPLPETRIDVEIPRISADLGKEQHFIKLPNFLSVVTHPFDPETYEDEIDEEETMDEEGRQRIKLKVSNTIRWREYMNNKGDMVRESNARFVRWSDGSMSLHLGNEIFDAYRQPLLGDHNHLFVRQGTGLQGQSVFRTKLTFRPHSTESFTHKKMTMSLADRSSKTSGIKILTQVGKDPTTDRPTQLREEEAKLRQAMRNQHKSLPKKKKPGAGEPLIGGGTSSYQHDEGSDDENAISLSAIKNRYKKGSGAGQAEVKASTIYSSDEDEGSDFEARRSKKVDKAKASKALRDSDSESDAGSAKSGHSNKSGGEGGSASGSENEGSQKSGGGSSKSASGSGSGSGSGSGSGSDND.

Positions 1–10 (MGSQNSDDDS) are enriched in acidic residues. 3 disordered regions span residues 1–379 (MGSQ…PETR), 566–603 (RQAM…EGSD), and 617–725 (YKKG…SDND). The span at 11-70 (GSSGSSRSGSRSVTPQGGSAPGSQRSRRSGSGSDRSRSGSRSSRSRSGSGSPRSARSGSA) shows a compositional bias: low complexity. The span at 82-101 (RSKRSRSAHSRRSGSARSRK) shows a compositional bias: basic residues. Residues 104 to 116 (TPESPQSHRSGSL) are compositionally biased toward polar residues. A compositionally biased stretch (low complexity) spans 117–140 (QSRKSGSPQSRRSGSPQSRKSGST). The span at 141-160 (HSRRSGSAHSRRSGSARSRK) shows a compositional bias: basic residues. Residues serine 175, serine 186, serine 188, and serine 190 each carry the phosphoserine modification. The span at 206-223 (SRSRSRSRSGSRTSRSRS) shows a compositional bias: basic residues. Over residues 224–242 (KTGTPSPNRSRSGSASGSG) the composition is skewed to low complexity. A phosphoserine mark is found at serine 265, serine 267, and serine 269. Threonine 286 is subject to Phosphothreonine. A phosphoserine mark is found at serine 288, serine 290, and serine 312. Acidic residues predominate over residues 306-318 (GDADDISDDEDEA). A compositionally biased stretch (basic residues) spans 325–353 (SPVRSKSRSQSKSHSHSRSMSHSRSRSRS). The span at 354–369 (RSRDKVESQVESAPKE) shows a compositional bias: basic and acidic residues. Position 355 is a phosphoserine (serine 355). Over residues 571-582 (NQHKSLPKKKKP) the composition is skewed to basic residues. Threonine 593 carries the phosphothreonine modification. A phosphoserine mark is found at serine 595, serine 602, and serine 631. Residue threonine 632 is modified to Phosphothreonine. Residues serine 635, serine 636, and serine 642 each carry the phosphoserine modification. Residues 644-665 (FEARRSKKVDKAKASKALRDSD) are compositionally biased toward basic and acidic residues. Residues 710–725 (SGSGSGSGSGSGSDND) show a composition bias toward gly residues.

In Drosophila melanogaster (Fruit fly), this protein is Another transcription unit protein (Atu).